Reading from the N-terminus, the 267-residue chain is 5'-nucleotidase SurE (267 aa).

The a divalent metal cation site is built by aspartate 9, aspartate 10, serine 40, and asparagine 97.

Belongs to the SurE nucleotidase family. The cofactor is a divalent metal cation.

It is found in the cytoplasm. It carries out the reaction a ribonucleoside 5'-phosphate + H2O = a ribonucleoside + phosphate. Functionally, nucleotidase that shows phosphatase activity on nucleoside 5'-monophosphates. The sequence is that of 5'-nucleotidase SurE from Helicobacter pylori (strain J99 / ATCC 700824) (Campylobacter pylori J99).